Here is a 611-residue protein sequence, read N- to C-terminus: Dihydroxy-acid dehydratase (611 aa).

D81 lines the Mg(2+) pocket. C122 contributes to the [2Fe-2S] cluster binding site. Positions 123 and 124 each coordinate Mg(2+). Position 124 is an N6-carboxylysine (K124). C195 provides a ligand contact to [2Fe-2S] cluster. Position 491 (E491) interacts with Mg(2+). The active-site Proton acceptor is the S517.

It belongs to the IlvD/Edd family. Homodimer. [2Fe-2S] cluster serves as cofactor. Requires Mg(2+) as cofactor.

The enzyme catalyses (2R)-2,3-dihydroxy-3-methylbutanoate = 3-methyl-2-oxobutanoate + H2O. It carries out the reaction (2R,3R)-2,3-dihydroxy-3-methylpentanoate = (S)-3-methyl-2-oxopentanoate + H2O. Its pathway is amino-acid biosynthesis; L-isoleucine biosynthesis; L-isoleucine from 2-oxobutanoate: step 3/4. It functions in the pathway amino-acid biosynthesis; L-valine biosynthesis; L-valine from pyruvate: step 3/4. Functions in the biosynthesis of branched-chain amino acids. Catalyzes the dehydration of (2R,3R)-2,3-dihydroxy-3-methylpentanoate (2,3-dihydroxy-3-methylvalerate) into 2-oxo-3-methylpentanoate (2-oxo-3-methylvalerate) and of (2R)-2,3-dihydroxy-3-methylbutanoate (2,3-dihydroxyisovalerate) into 2-oxo-3-methylbutanoate (2-oxoisovalerate), the penultimate precursor to L-isoleucine and L-valine, respectively. This Brucella melitensis biotype 1 (strain ATCC 23456 / CCUG 17765 / NCTC 10094 / 16M) protein is Dihydroxy-acid dehydratase.